We begin with the raw amino-acid sequence, 104 residues long: Large ribosomal subunit protein uL24 (104 aa).

It belongs to the universal ribosomal protein uL24 family. Part of the 50S ribosomal subunit.

Functionally, one of two assembly initiator proteins, it binds directly to the 5'-end of the 23S rRNA, where it nucleates assembly of the 50S subunit. In terms of biological role, one of the proteins that surrounds the polypeptide exit tunnel on the outside of the subunit. In Bartonella bacilliformis (strain ATCC 35685 / KC583 / Herrer 020/F12,63), this protein is Large ribosomal subunit protein uL24.